The primary structure comprises 260 residues: Universal stress protein PHOS34 (260 aa).

The transit peptide at 1 to 33 (MNPDSDYPHLPNIKIHHPSSPRHSHHHSSSTPS) directs the protein to the chloroplast. The interval 1–42 (MNPDSDYPHLPNIKIHHPSSPRHSHHHSSSTPSAATPTPTAG) is disordered. The span at 14 to 28 (KIHHPSSPRHSHHHS) shows a compositional bias: basic residues. P18 is an ATP binding site. Residue S20 is modified to Phosphoserine; by MAPK3 and MAPK6. A compositionally biased stretch (low complexity) spans 29–41 (SSTPSAATPTPTA). V80 is a binding site for ATP. The interval 92–118 (GPLPLQTPPPPSAATDPGAQPKPSQED) is disordered. ATP is bound by residues 170–179 (GSRGFGAEKR) and 187–189 (SVS). The tract at residues 209–260 (RDGPAPPGNVGATREAIVTVKSRRDDDDDDDEDHEAKIAAAASDHHEHIKDE) is disordered. At S230 the chain carries Phosphoserine. Over residues 251–260 (SDHHEHIKDE) the composition is skewed to basic and acidic residues.

This sequence belongs to the universal stress protein A family. In terms of processing, phosphorylated by MAPK3 and MAPK6 after pathogenic elicitation (e.g. bacterial flg22, Phytophthora infestans zoospores and xylanase).

The protein resides in the plastid. Its subcellular location is the chloroplast. The chain is Universal stress protein PHOS34 from Arabidopsis thaliana (Mouse-ear cress).